We begin with the raw amino-acid sequence, 410 residues long: Multidrug resistance protein MdtM (410 aa).

Over 1 to 11 (MPRFFTRHAAT) the chain is Cytoplasmic. The helical transmembrane segment at 12 to 32 (LFFPMALILYDFAAYLSTDLI) threads the bilayer. The Periplasmic segment spans residues 33–48 (QPGIINVVRDFNADVS). A helical transmembrane segment spans residues 49–69 (LAPAAVSLYLAGGMALQWLLG). At 70-78 (PLSDRIGRR) the chain is on the cytoplasmic side. Residues 79 to 99 (PVLITGALIFTLACAATMFTT) form a helical membrane-spanning segment. At 100 to 103 (SMTQ) the chain is on the periplasmic side. Residues 104–124 (FLIARAIQGTSICFIATVGYV) traverse the membrane as a helical segment. Residues 125–140 (TVQEAFGQTKGIKLMA) are Cytoplasmic-facing. The helical transmembrane segment at 141-161 (IITSIVLIAPIIGPLSGAALM) threads the bilayer. The Periplasmic segment spans residues 162–167 (HFMHWK). The helical transmembrane segment at 168–188 (VLFAIIAVMGFISFVGLLLAM) threads the bilayer. Residues 189–216 (PETVKRGAVPFSAKSVLRDFRNVFCNRL) lie on the Cytoplasmic side of the membrane. The chain crosses the membrane as a helical span at residues 217–237 (FLFGAATISLSYIPMMSWVAV). Topologically, residues 238–251 (SPVILIDAGSLTTS) are periplasmic. A helical transmembrane segment spans residues 252–272 (QFAWTQVPVFGAVIVANAIVA). Residues 273–282 (RFVKDPTEPR) lie on the Cytoplasmic side of the membrane. The helical transmembrane segment at 283 to 303 (FIWRAVPIQLVGLSLLIVGNL) threads the bilayer. Residues 304 to 307 (LSPH) lie on the Periplasmic side of the membrane. The helical transmembrane segment at 308–328 (VWLWSVLGTSLYAFGIGLIFP) threads the bilayer. Residues 329–348 (TLFRFTLFSNKLPKGTVSAS) lie on the Cytoplasmic side of the membrane. Residues 349-369 (LNMVILMVMSVSVEIGRWLWF) form a helical membrane-spanning segment. The Periplasmic portion of the chain corresponds to 370–373 (NGGR). A helical membrane pass occupies residues 374-394 (LPFHLLAVVAGVIVVFTLAGL). Topologically, residues 395–410 (LNRVRQHQAAELVEEQ) are cytoplasmic.

The protein belongs to the major facilitator superfamily. Monomer.

It is found in the cell inner membrane. The enzyme catalyses Na(+)(in) + 2 H(+)(out) = Na(+)(out) + 2 H(+)(in). The catalysed reaction is K(+)(in) + H(+)(out) = K(+)(out) + H(+)(in). Efflux is inhibited by the ionophore carbonyl cyanide 3-chlorophenylhydrazone (CCCP). Proton-dependent efflux pump. Confers resistance to a broad spectrum of chemically unrelated substrates. Overexpression confers resistance to acriflavine, chloramphenicol, norfloxacin, ethidium bromide and tetraphenylphosphonium bromide (TPP). Can also export a broad range of quaternary ammonium compounds (QACs) and contribute to the intrinsic resistance of E.coli to these antimicrobial compounds. In addition to its role in multidrug resistance, MdtM likely plays a physiological role in alkaline pH homeostasis and in resistance to bile salts. May function in alkaline pH homeostasis when millimolar concentrations of sodium or potassium are present in the growth medium. When overexpressed, can confer a tolerance to alkaline pH values up to 9.75. Probably acts as a low-affinity antiporter that catalyzes the exchange of internal Na(+) and K(+) cations for extracellular protons to maintain a stable internal pH, acid relative to outside, during exposure to alkaline environments. Can also catalyze Rb(+)/H(+) and Li(+)/H(+) antiport, but not Ca(2+)/H(+) exchange. The exact stoichiometry of antiport is unknown. Finally, it could contribute to bile salt resistance by catalyzing the transport of bile salts out of the cell cytoplasm. Mediates a bile salt/H(+) exchange driven by the electrochemical gradient. Binds to cholate and deoxycholate with micromolar affinity and catalyzes both cholate/H(+) and deoxycholate/H(+) exchange reactions. This is Multidrug resistance protein MdtM from Escherichia coli (strain K12).